The following is a 286-amino-acid chain: Phosphate import ATP-binding protein PstB (286 aa).

The ABC transporter domain maps to 40-281 (VVARDFSIYY…PKDSMTEDYI (242 aa)). An ATP-binding site is contributed by 72–79 (GPSGCGKS).

It belongs to the ABC transporter superfamily. Phosphate importer (TC 3.A.1.7) family. In terms of assembly, the complex is composed of two ATP-binding proteins (PstB), two transmembrane proteins (PstC and PstA) and a solute-binding protein (PstS).

The protein resides in the cell inner membrane. The enzyme catalyses phosphate(out) + ATP + H2O = ADP + 2 phosphate(in) + H(+). In terms of biological role, part of the ABC transporter complex PstSACB involved in phosphate import. Responsible for energy coupling to the transport system. In Chlorobaculum tepidum (strain ATCC 49652 / DSM 12025 / NBRC 103806 / TLS) (Chlorobium tepidum), this protein is Phosphate import ATP-binding protein PstB.